Consider the following 322-residue polypeptide: tRNA-dihydrouridine(16) synthase (322 aa).

FMN is bound by residues 8-10 (PME) and Gln69. Cys99 serves as the catalytic Proton donor. Residues Lys140, 200–202 (NGD), and 224–225 (GR) each bind FMN.

This sequence belongs to the Dus family. DusC subfamily. FMN serves as cofactor.

The catalysed reaction is 5,6-dihydrouridine(16) in tRNA + NADP(+) = uridine(16) in tRNA + NADPH + H(+). It catalyses the reaction 5,6-dihydrouridine(16) in tRNA + NAD(+) = uridine(16) in tRNA + NADH + H(+). Its function is as follows. Catalyzes the synthesis of 5,6-dihydrouridine (D), a modified base found in the D-loop of most tRNAs, via the reduction of the C5-C6 double bond in target uridines. Specifically modifies U16 in tRNAs. The sequence is that of tRNA-dihydrouridine(16) synthase from Cupriavidus necator (strain ATCC 17699 / DSM 428 / KCTC 22496 / NCIMB 10442 / H16 / Stanier 337) (Ralstonia eutropha).